The following is a 104-amino-acid chain: Ig lambda-1 chain C region (104 aa).

The region spanning 6–99 (PSVTLFPPSS…EENTVEKSLS (94 aa)) is the Ig-like domain. Residues Cys27 and Cys85 are joined by a disulfide bond.

The chain is Ig lambda-1 chain C region from Rattus norvegicus (Rat).